Consider the following 146-residue polypeptide: uncharacterized protein (146 aa).

Residues 7-146 form the N-acetyltransferase domain; sequence LQINYKTDEL…EGHDILIWNP (140 aa).

This is an uncharacterized protein from Staphylococcus epidermidis (strain ATCC 12228 / FDA PCI 1200).